An 864-amino-acid polypeptide reads, in one-letter code: Mitochondrial 15S rRNA processing factor CCM1 (864 aa).

The N-terminal 76 residues, 1-76 (MYMARCGPKN…REFSNTLKER (76 aa)), are a transit peptide targeting the mitochondrion. Composition is skewed to polar residues over residues 80–94 (TKSV…NSIA) and 102–112 (NVNVTKTSSVP). The disordered stretch occupies residues 80–117 (TKSVNSDGHQSNSIAPISEDSRNVNVTKTSSVPNEEKS). 2 PPR repeats span residues 319-353 (NKQN…STKH) and 356-390 (DICT…NIKP).

Belongs to the CCM1 family. Binds to mitochondrial small subunit 15S rRNA.

Its subcellular location is the mitochondrion. Functionally, regulates mitochondrial small subunit maturation by controlling 15S rRNA 5'-end processing. Localizes to the 5' precursor of the 15S rRNA in a position that is subsequently occupied by mS47 in the mature yeast mtSSU. Uses structure and sequence-specific RNA recognition, binding to a single-stranded region of the precursor and specifically recognizing bases -6 to -1. The exchange of Ccm1 for mS47 is coupled to the irreversible removal of precursor rRNA that is accompanied by conformational changes of the mitoribosomal proteins uS5m and mS26. These conformational changes signal completion of 5'-end rRNA processing through protection of the mature 5'-end of the 15S rRNA and stabilization of mS47. The removal of the 5' precursor together with the dissociation of Ccm1 may be catalyzed by the 5'-3' exoribonuclease Pet127. Involved in the specific removal of group I introns in mitochondrial encoded transcripts. This chain is Mitochondrial 15S rRNA processing factor CCM1, found in Saccharomyces cerevisiae (strain ATCC 204508 / S288c) (Baker's yeast).